The primary structure comprises 779 residues: Aconitate hydratase, mitochondrial (779 aa).

Residues 1 to 28 constitute a mitochondrion transit peptide; sequence MIAMDRIARIPIARWTSRAFRVSAAARQ. Substrate-binding positions include Gln-97 and 190–192; that span reads DSH. Residues Cys-383, Cys-446, and Cys-449 each coordinate [4Fe-4S] cluster. Residues Arg-472, Arg-477, Arg-605, and 668–669 each bind substrate; that span reads SR.

Belongs to the aconitase/IPM isomerase family. As to quaternary structure, monomer. [4Fe-4S] cluster is required as a cofactor.

Its subcellular location is the mitochondrion. The catalysed reaction is citrate = D-threo-isocitrate. Its pathway is carbohydrate metabolism; tricarboxylic acid cycle; isocitrate from oxaloacetate: step 2/2. Its function is as follows. Catalyzes the isomerization of citrate to isocitrate via cis-aconitate. The chain is Aconitate hydratase, mitochondrial from Gracilaria gracilis (Red alga).